We begin with the raw amino-acid sequence, 259 residues long: Global transcriptional regulator CodY (259 aa).

The GAF domain stretch occupies residues 1-155 (MNLLAKTRKL…GATVVGMEIL (155 aa)). Positions 203–222 (ASKIADRVGITRSVIVNALR) form a DNA-binding region, H-T-H motif.

The protein belongs to the CodY family.

The protein localises to the cytoplasm. Functionally, DNA-binding global transcriptional regulator which is involved in the adaptive response to starvation and acts by directly or indirectly controlling the expression of numerous genes in response to nutrient availability. During rapid exponential growth, CodY is highly active and represses genes whose products allow adaptation to nutrient depletion. The protein is Global transcriptional regulator CodY of Exiguobacterium sibiricum (strain DSM 17290 / CCUG 55495 / CIP 109462 / JCM 13490 / 255-15).